The sequence spans 316 residues: Meiotically up-regulated gene 154 protein (316 aa).

A run of 4 helical transmembrane segments spans residues 41–61 (YSIP…IYIK), 88–108 (AFLS…FIFS), 159–179 (FLLN…WFYS), and 186–206 (LLTF…SLLL). A disordered region spans residues 291–316 (HDSGISRDSSSPFKRFPHLSDGSSRF).

It is found in the endoplasmic reticulum membrane. Functionally, has a role in meiosis. The sequence is that of Meiotically up-regulated gene 154 protein (mug154) from Schizosaccharomyces pombe (strain 972 / ATCC 24843) (Fission yeast).